A 148-amino-acid polypeptide reads, in one-letter code: Large ribosomal subunit protein bL9 (148 aa).

The protein belongs to the bacterial ribosomal protein bL9 family.

Its function is as follows. Binds to the 23S rRNA. This chain is Large ribosomal subunit protein bL9, found in Salinispora tropica (strain ATCC BAA-916 / DSM 44818 / JCM 13857 / NBRC 105044 / CNB-440).